We begin with the raw amino-acid sequence, 1137 residues long: Dendrite extension defective protein 1 (1137 aa).

The first 41 residues, 1–41, serve as a signal peptide directing secretion; it reads MLAHTHRINKCLYGQNQMRNRHALLGALPPIFLLLLPLISC. At 43–1005 the chain is on the extracellular side; sequence KFDPERIAAR…HAEEQSPRLA (963 aa). The region spanning 163–302 is the NIDO 1 domain; it reads PFWNRNDLRN…GEWMFELSEL (140 aa). Asn-240 and Asn-416 each carry an N-linked (GlcNAc...) asparagine glycan. An EGF-like; calcium-binding domain is found at 409–450; that stretch reads DVDECKTNSTICHKNAICTNTPGRYFCMCKEGFSGDGQNDCS. Intrachain disulfides connect Cys-413–Cys-426, Cys-420–Cys-435, and Cys-437–Cys-449. Residues 519–659 form the NIDO 2 domain; it reads PFFGPIDLSR…GTWLYRIDKA (141 aa). N-linked (GlcNAc...) asparagine glycosylation occurs at Asn-571. Residues 738 to 749 are compositionally biased toward polar residues; that stretch reads IGNQQRQQTTKA. Disordered regions lie at residues 738 to 765, 795 to 856, 878 to 897, 906 to 933, and 978 to 998; these read IGNQ…HRPI, FRPN…PFEA, QTTK…EDLS, TEED…TKAH, and NSQP…GHAE. Asn-756 carries an N-linked (GlcNAc...) asparagine glycan. Over residues 798–809 the composition is skewed to polar residues; that stretch reads NQRNGVQKSTQR. Positions 819–833 are enriched in basic and acidic residues; it reads PLKEEATTSVPREKT. The span at 906 to 915 shows a compositional bias: acidic residues; that stretch reads TEEDEEEAEI. Positions 916–933 are enriched in low complexity; sequence STETTTEMSSTTTTTKAH. Polar residues predominate over residues 978–992; sequence NSQPPKQRNDNQPTV. A helical transmembrane segment spans residues 1006–1026; the sequence is ILLPVMIILAWLVILVCIGAV. Topologically, residues 1027-1037 are cytoplasmic; the sequence is VCCKRRNSRES. Residues 1106–1125 are disordered; the sequence is ARLSTQERQSPPSFVNNGYT.

Post-translationally, may be proteolytically cleaved and secreted.

It is found in the membrane. It localises to the cell projection. The protein localises to the dendrite. Its subcellular location is the secreted. In terms of biological role, along with dyf-7, enables neurite growth and maintenance by anchoring amphid dendritic tips during neuron cell body migration in embryonic and larval development. Promotes seam cell remodeling during the dauer phase. Plays a role in positively regulating locomotion during the dauer phase. The protein is Dendrite extension defective protein 1 of Caenorhabditis elegans.